The chain runs to 198 residues: Elongation factor Ts (198 aa).

Residues 82-85 form an involved in Mg(2+) ion dislocation from EF-Tu region; that stretch reads TDFV.

This sequence belongs to the EF-Ts family.

Its subcellular location is the cytoplasm. Functionally, associates with the EF-Tu.GDP complex and induces the exchange of GDP to GTP. It remains bound to the aminoacyl-tRNA.EF-Tu.GTP complex up to the GTP hydrolysis stage on the ribosome. The sequence is that of Elongation factor Ts from Oleidesulfovibrio alaskensis (strain ATCC BAA-1058 / DSM 17464 / G20) (Desulfovibrio alaskensis).